The primary structure comprises 371 residues: Transaldolase (371 aa).

K140 functions as the Schiff-base intermediate with substrate in the catalytic mechanism.

Belongs to the transaldolase family. Type 2 subfamily.

The protein localises to the cytoplasm. The enzyme catalyses D-sedoheptulose 7-phosphate + D-glyceraldehyde 3-phosphate = D-erythrose 4-phosphate + beta-D-fructose 6-phosphate. Its pathway is carbohydrate degradation; pentose phosphate pathway; D-glyceraldehyde 3-phosphate and beta-D-fructose 6-phosphate from D-ribose 5-phosphate and D-xylulose 5-phosphate (non-oxidative stage): step 2/3. Transaldolase is important for the balance of metabolites in the pentose-phosphate pathway. The chain is Transaldolase from Frankia alni (strain DSM 45986 / CECT 9034 / ACN14a).